Reading from the N-terminus, the 265-residue chain is Homeobox protein engrailed-2-A (265 aa).

Composition is skewed to basic and acidic residues over residues 1–12 (MEENEQNNREVE) and 102–115 (GEKK…ETLK). Disordered regions lie at residues 1–38 (MEEN…QPHH), 75–140 (LSGA…KATQ), and 156–181 (DRPS…RPRT). Positions 122-136 (DHSLSSDSDSSQTSS) are enriched in low complexity. The homeobox DNA-binding region spans 176–235 (DKRPRTAFTADQLQRLKAEFQTNRYLTEQRRQSLAQELSLNESQIKIWFQNKRAKIKKAT).

Belongs to the engrailed homeobox family.

It is found in the nucleus. This chain is Homeobox protein engrailed-2-A (en2-a), found in Xenopus laevis (African clawed frog).